We begin with the raw amino-acid sequence, 80 residues long: Secreted transmembrane peptide 3 (80 aa).

The first 27 residues, 1–27, serve as a signal peptide directing secretion; it reads MGLKMSSNALLLSLFLLLLCLFSEIGG. The interval 44–80 is disordered; it reads IATPPSLTCGGQRLGGPQPRLSPCPRPRPRPRPRTGS. The SCOOP motif motif lies at 62–80; the sequence is PRLSPCPRPRPRPRPRTGS. Residues 70-80 show a composition bias toward basic residues; it reads PRPRPRPRTGS.

Belongs to the serine rich endogenous peptide (SCOOP) phytocytokine family. Interacts with MIK2 (via extracellular leucine-rich repeat domain); this interaction triggers the formation of complex between MIK2 and the BAK1/SERK3 and SERK4 coreceptors, and subsequent BAK1 activation by phosphorylation. Mostly expressed in leaves, and, to a lower extent, in roots, stems, siliques, seeds and flowers.

The protein localises to the cell membrane. It is found in the secreted. The protein resides in the extracellular space. It localises to the apoplast. Its subcellular location is the endoplasmic reticulum. The protein localises to the golgi apparatus. Functionally, brassicaceae-specific phytocytokine (plant endogenous peptide released into the apoplast) perceived by MIK2 in a BAK1/SERK3 and SERK4 coreceptors-dependent manner, that modulates various physiological and antimicrobial processes including growth prevention and reactive oxygen species (ROS) response regulation. This Arabidopsis thaliana (Mouse-ear cress) protein is Secreted transmembrane peptide 3.